Consider the following 933-residue polypeptide: MTELKAKGPRAPHVAGGPPSPEVGSPLLCRPAAGPYPGSQTSDTLPEVSAIPISLDGLLFPRPCQGQDPSDEKTQDQQSLSDVEGAYSRAEATRGAGGSSSSPPEKDSGLLDSVLETLLAPSGPGQSQPSPPACEVTSSWCLFGPELPEDPPAAPATQGVLSPLMSRSGGKAGDSSGTAAAHKVLPRGLSPSRQLLLPVSGSPHWSGAPVKPSPQPAAVEVEEEDGSESEESAGPLLKGKPRALGGAAAGGGAAAVPPGAAAGGVALVPKEDSRFSAPRVALVEQDAPMAPGRSPLATTVMDFIHVPILPLNHALLAARTRQLLEDESYDGGAGAASAFAPPRSSPSASSTPVAVGDFPDCAYPPDAEPKDDAYPLYSDFQPPALKIKEEEEGAEASARSPRSYLVAGANPAAFPDFPLGPPPPLPPRAPPSRPGEAAVTAAPASASVSSASSSGSTLECILYKAEGAPPQQGPFAPPPCKAPGASGCLLPRDGLPSTSASAAAAGAAPALYPALGLNGLPQLGYQAAVLKEGLPQVYPPYLNYLRPDSEASQSPQYSFESLPQKICLICGDEASGCHYGVLTCGSCKVFFKRAMEGQHNYLCAGRNDCIVDKIRRKNCPACRLRKCCQAGMVLGGRKFKKFNKVRVVRALDAVALPQPVGIPNESQALSQRFTFSPGQDIQLIPPLINLLMSIEPDVIYAGHDNTKPDTSSSLLTSLNQLGERQLLSVVKWSKSLPGFRNLHIDDQITLIQYSWMSLMVFGLGWRSYKHVSGQMLYFAPDLILNEQRMKESSFYSLCLTMWQIPQEFVKLQVSQEEFLCMKVLLLLNTIPLEGLRSQTQFEEMRSSYIRELIKAIGLRQKGVVSSSQRFYQLTKLLDNLHDLVKQLHLYCLNTFIQSRALSVEFPEMMSEVIAAQLPKILAGMVKPLLFHKK.

Residues 1-164 (MTELKAKGPR…PATQGVLSPL (164 aa)) are AF3; mediates transcriptional activation. The tract at residues 1–256 (MTELKAKGPR…AAAGGGAAAV (256 aa)) is disordered. The interval 1–566 (MTELKAKGPR…YSFESLPQKI (566 aa)) is modulating, Pro-Rich. The residue at position 20 (S20) is a Phosphoserine. The LXXL motif 1 motif lies at 55 to 59 (LDGLL). S81 carries the phosphoserine modification. The LXXL motif 2 signature appears at 115 to 119 (LETLL). Phosphoserine is present on residues S130 and S162. The tract at residues 165–305 (MSRSGGKAGD…LATTVMDFIH (141 aa)) is mediates transcriptional transrepression. The short motif at 183-187 (KVLPR) is the Nuclear localization signal element. Phosphoserine occurs at positions 190 and 213. The span at 220 to 231 (EVEEEDGSESEE) shows a compositional bias: acidic residues. Residues 232–246 (SAGPLLKGKPRALGG) show a composition bias toward low complexity. At S294 the chain carries Phosphoserine; by MAPK1. The disordered stretch occupies residues 331–378 (GGAGAASAFAPPRSSPSASSTPVAVGDFPDCAYPPDAEPKDDAYPLYS). The span at 335 to 350 (AASAFAPPRSSPSASS) shows a compositional bias: low complexity. S345 carries the phosphoserine; by MAPK modification. K388 is covalently cross-linked (Glycyl lysine isopeptide (Lys-Gly) (interchain with G-Cter in SUMO); alternate). Residue K388 forms a Glycyl lysine isopeptide (Lys-Gly) (interchain with G-Cter in ubiquitin); alternate linkage. S400 bears the Phosphoserine; by CDK2 mark. Residues 415-452 (PDFPLGPPPPLPPRAPPSRPGEAAVTAAPASASVSSAS) are disordered. The span at 418–433 (PLGPPPPLPPRAPPSR) shows a compositional bias: pro residues. The segment covering 434-452 (PGEAAVTAAPASASVSSAS) has biased composition (low complexity). The interval 456 to 546 (STLECILYKA…VYPPYLNYLR (91 aa)) is AF1; mediates transcriptional activation. A Glycyl lysine isopeptide (Lys-Gly) (interchain with G-Cter in SUMO) cross-link involves residue K531. 2 consecutive NR C4-type zinc fingers follow at residues 567 to 587 (CLIC…CGSC) and 603 to 627 (CAGR…LRKC). The nuclear receptor DNA-binding region spans 567-639 (CLICGDEASG…AGMVLGGRKF (73 aa)). S676 carries the phosphoserine modification. The NR LBD domain maps to 679–913 (QDIQLIPPLI…EFPEMMSEVI (235 aa)). The AF2; mediates transcriptional activation stretch occupies residues 687–933 (LINLLMSIEP…MVKPLLFHKK (247 aa)). R766 provides a ligand contact to progesterone.

The protein belongs to the nuclear hormone receptor family. As to quaternary structure, interacts with SMARD1 and UNC45A. Interacts with CUEDC2; the interaction promotes ubiquitination, decreases sumoylation, and represses transcriptional activity. Interacts with PIAS3; the interaction promotes sumoylation of PR in a hormone-dependent manner, inhibits DNA-binding, and alters nuclear export. Interacts with SP1; the interaction requires ligand-induced phosphorylation on Ser-345 by ERK1/2-MAPK. Interacts with PRMT2. Interacts with NCOA2 and NCOA1. Interacts with KLF9. Interacts with GTF2B. In terms of processing, phosphorylated on multiple serine sites. Several of these sites are hormone-dependent. Phosphorylation on Ser-294 is highly hormone-dependent and modulates ubiquitination and sumoylation on Lys-388. Phosphorylation on Ser-102 and Ser-345 also requires induction by hormone. Basal phosphorylation on Ser-81, Ser-162, Ser-190 and Ser-400 is increased in response to progesterone and can be phosphorylated in vitro by the CDK2-A1 complex. Increased levels of phosphorylation on Ser-400 also in the presence of EGF, heregulin, IGF, PMA and FBS. Phosphorylation at this site by CDK2 is ligand-independent, and increases nuclear translocation and transcriptional activity. Phosphorylation at Ser-162 and Ser-294, but not at Ser-190, is impaired during the G(2)/M phase of the cell cycle. Phosphorylation on Ser-345 by ERK1/2 MAPK is required for interaction with SP1. Sumoylation is hormone-dependent and represses transcriptional activity. Sumoylation on all three sites is enhanced by PIAS3. Desumoylated by SENP1. Sumoylation on Lys-388, the main site of sumoylation, is repressed by ubiquitination on the same site, and modulated by phosphorylation at Ser-294. Post-translationally, ubiquitination is hormone-dependent and represses sumoylation on the same site. Promoted by MAPK-mediated phosphorylation on Ser-294. Ubiquitinated by UBR5, leading to its degradation: UBR5 specifically recognizes and binds ligand-bound PGR when it is not associated with coactivators (NCOAs). In presence of NCOAs, the UBR5-degron is not accessible, preventing its ubiquitination and degradation. In terms of processing, palmitoylated by ZDHHC7 and ZDHHC21. Palmitoylation is required for plasma membrane targeting and for rapid intracellular signaling via ERK and AKT kinases and cAMP generation.

The protein resides in the nucleus. The protein localises to the cytoplasm. The steroid hormones and their receptors are involved in the regulation of eukaryotic gene expression and affect cellular proliferation and differentiation in target tissues. Transcriptional activator of several progesteron-dependent promoters in a variety of cell types. Involved in activation of SRC-dependent MAPK signaling on hormone stimulation. The polypeptide is Progesterone receptor (PGR) (Gorilla gorilla gorilla (Western lowland gorilla)).